A 314-amino-acid chain; its full sequence is F-box protein AUF2 (314 aa).

The 49-residue stretch at 1-49 (MDVFDGLPDPIIVDILNKVGDVKTLLRCSSLSKRFNSLVPQSESLTLRL) folds into the F-box domain.

As to quaternary structure, part of a SCF (ASK-cullin-F-box) protein ligase complex.

The protein localises to the nucleus. The protein operates within protein modification; protein ubiquitination. In terms of biological role, component of SCF(ASK-cullin-F-box) E3 ubiquitin ligase complexes, which may mediate the ubiquitination and subsequent proteasomal degradation of target proteins. The chain is F-box protein AUF2 from Arabidopsis thaliana (Mouse-ear cress).